Consider the following 270-residue polypeptide: Phosphatidylglycerol--prolipoprotein diacylglyceryl transferase (270 aa).

A run of 4 helical transmembrane segments spans residues F19 to A39, L56 to E76, Q92 to A112, and G116 to I136. R138 provides a ligand contact to a 1,2-diacyl-sn-glycero-3-phospho-(1'-sn-glycerol). The next 3 membrane-spanning stretches (helical) occupy residues H178 to L198, G206 to L226, and L236 to V256.

It belongs to the Lgt family.

It is found in the cell membrane. It carries out the reaction L-cysteinyl-[prolipoprotein] + a 1,2-diacyl-sn-glycero-3-phospho-(1'-sn-glycerol) = an S-1,2-diacyl-sn-glyceryl-L-cysteinyl-[prolipoprotein] + sn-glycerol 1-phosphate + H(+). It functions in the pathway protein modification; lipoprotein biosynthesis (diacylglyceryl transfer). Catalyzes the transfer of the diacylglyceryl group from phosphatidylglycerol to the sulfhydryl group of the N-terminal cysteine of a prolipoprotein, the first step in the formation of mature lipoproteins. The chain is Phosphatidylglycerol--prolipoprotein diacylglyceryl transferase from Bacillus thuringiensis subsp. konkukian (strain 97-27).